The following is a 119-amino-acid chain: Holo-[acyl-carrier-protein] synthase (119 aa).

Mg(2+) contacts are provided by Asp-8 and Glu-59.

Belongs to the P-Pant transferase superfamily. AcpS family. It depends on Mg(2+) as a cofactor.

It localises to the cytoplasm. The enzyme catalyses apo-[ACP] + CoA = holo-[ACP] + adenosine 3',5'-bisphosphate + H(+). In terms of biological role, transfers the 4'-phosphopantetheine moiety from coenzyme A to a Ser of acyl-carrier-protein. The protein is Holo-[acyl-carrier-protein] synthase of Staphylococcus aureus (strain USA300).